Consider the following 396-residue polypeptide: Probable tRNA sulfurtransferase (396 aa).

The region spanning 63 to 166 (AAAARASARV…GRRAYFFDTI (104 aa)) is the THUMP domain. Residues 184–185 (LY), R266, G288, and Q297 each bind ATP.

The protein belongs to the ThiI family.

It localises to the cytoplasm. It catalyses the reaction [ThiI sulfur-carrier protein]-S-sulfanyl-L-cysteine + a uridine in tRNA + 2 reduced [2Fe-2S]-[ferredoxin] + ATP + H(+) = [ThiI sulfur-carrier protein]-L-cysteine + a 4-thiouridine in tRNA + 2 oxidized [2Fe-2S]-[ferredoxin] + AMP + diphosphate. It carries out the reaction [ThiS sulfur-carrier protein]-C-terminal Gly-Gly-AMP + S-sulfanyl-L-cysteinyl-[cysteine desulfurase] + AH2 = [ThiS sulfur-carrier protein]-C-terminal-Gly-aminoethanethioate + L-cysteinyl-[cysteine desulfurase] + A + AMP + 2 H(+). It participates in cofactor biosynthesis; thiamine diphosphate biosynthesis. Catalyzes the ATP-dependent transfer of a sulfur to tRNA to produce 4-thiouridine in position 8 of tRNAs, which functions as a near-UV photosensor. Also catalyzes the transfer of sulfur to the sulfur carrier protein ThiS, forming ThiS-thiocarboxylate. This is a step in the synthesis of thiazole, in the thiamine biosynthesis pathway. The sulfur is donated as persulfide by IscS. The sequence is that of Probable tRNA sulfurtransferase from Aeropyrum pernix (strain ATCC 700893 / DSM 11879 / JCM 9820 / NBRC 100138 / K1).